The sequence spans 555 residues: CTP synthase (555 aa).

An amidoligase domain region spans residues 1-265; that stretch reads MTRYIFITGG…GNRVCEKLNI (265 aa). Ser-13 contacts CTP. UTP is bound at residue Ser-13. ATP contacts are provided by residues 14 to 19 and Asp-71; that span reads SLGKGI. Residues Asp-71 and Glu-139 each coordinate Mg(2+). CTP-binding positions include 146–148, 186–191, and Lys-222; these read DIE and KTKPTQ. Residues 186 to 191 and Lys-222 contribute to the UTP site; that span reads KTKPTQ. A Glutamine amidotransferase type-1 domain is found at 290–541; that stretch reads TVAVVGKYVD…IKAGLAAKEA (252 aa). Gly-351 contacts L-glutamine. Cys-378 functions as the Nucleophile; for glutamine hydrolysis in the catalytic mechanism. Residues 379 to 382, Glu-402, and Arg-469 contribute to the L-glutamine site; that span reads LGMQ. Residues His-514 and Glu-516 contribute to the active site.

This sequence belongs to the CTP synthase family. As to quaternary structure, homotetramer.

It catalyses the reaction UTP + L-glutamine + ATP + H2O = CTP + L-glutamate + ADP + phosphate + 2 H(+). The enzyme catalyses L-glutamine + H2O = L-glutamate + NH4(+). It carries out the reaction UTP + NH4(+) + ATP = CTP + ADP + phosphate + 2 H(+). It functions in the pathway pyrimidine metabolism; CTP biosynthesis via de novo pathway; CTP from UDP: step 2/2. Its activity is regulated as follows. Allosterically activated by GTP, when glutamine is the substrate; GTP has no effect on the reaction when ammonia is the substrate. The allosteric effector GTP functions by stabilizing the protein conformation that binds the tetrahedral intermediate(s) formed during glutamine hydrolysis. Inhibited by the product CTP, via allosteric rather than competitive inhibition. Catalyzes the ATP-dependent amination of UTP to CTP with either L-glutamine or ammonia as the source of nitrogen. Regulates intracellular CTP levels through interactions with the four ribonucleotide triphosphates. In Coxiella burnetii (strain RSA 331 / Henzerling II), this protein is CTP synthase.